The sequence spans 227 residues: Cytochrome c oxidase subunit 2 (227 aa).

The Mitochondrial intermembrane segment spans residues Met-1–Ser-14. A helical transmembrane segment spans residues Pro-15–Met-45. Over Leu-46–Gln-59 the chain is Mitochondrial matrix. Residues Glu-60–Met-87 form a helical membrane-spanning segment. Topologically, residues Asp-88 to Ile-227 are mitochondrial intermembrane. Cu cation-binding residues include His-161, Cys-196, Glu-198, Cys-200, His-204, and Met-207. Residue Glu-198 coordinates Mg(2+). Tyr-218 bears the Phosphotyrosine mark.

The protein belongs to the cytochrome c oxidase subunit 2 family. Component of the cytochrome c oxidase (complex IV, CIV), a multisubunit enzyme composed of 14 subunits. The complex is composed of a catalytic core of 3 subunits MT-CO1, MT-CO2 and MT-CO3, encoded in the mitochondrial DNA, and 11 supernumerary subunits COX4I, COX5A, COX5B, COX6A, COX6B, COX6C, COX7A, COX7B, COX7C, COX8 and NDUFA4, which are encoded in the nuclear genome. The complex exists as a monomer or a dimer and forms supercomplexes (SCs) in the inner mitochondrial membrane with NADH-ubiquinone oxidoreductase (complex I, CI) and ubiquinol-cytochrome c oxidoreductase (cytochrome b-c1 complex, complex III, CIII), resulting in different assemblies (supercomplex SCI(1)III(2)IV(1) and megacomplex MCI(2)III(2)IV(2)). Found in a complex with TMEM177, COA6, COX18, COX20, SCO1 and SCO2. Interacts with TMEM177 in a COX20-dependent manner. Interacts with COX20. Interacts with COX16. Requires Cu cation as cofactor.

The protein localises to the mitochondrion inner membrane. The enzyme catalyses 4 Fe(II)-[cytochrome c] + O2 + 8 H(+)(in) = 4 Fe(III)-[cytochrome c] + 2 H2O + 4 H(+)(out). Functionally, component of the cytochrome c oxidase, the last enzyme in the mitochondrial electron transport chain which drives oxidative phosphorylation. The respiratory chain contains 3 multisubunit complexes succinate dehydrogenase (complex II, CII), ubiquinol-cytochrome c oxidoreductase (cytochrome b-c1 complex, complex III, CIII) and cytochrome c oxidase (complex IV, CIV), that cooperate to transfer electrons derived from NADH and succinate to molecular oxygen, creating an electrochemical gradient over the inner membrane that drives transmembrane transport and the ATP synthase. Cytochrome c oxidase is the component of the respiratory chain that catalyzes the reduction of oxygen to water. Electrons originating from reduced cytochrome c in the intermembrane space (IMS) are transferred via the dinuclear copper A center (CU(A)) of subunit 2 and heme A of subunit 1 to the active site in subunit 1, a binuclear center (BNC) formed by heme A3 and copper B (CU(B)). The BNC reduces molecular oxygen to 2 water molecules using 4 electrons from cytochrome c in the IMS and 4 protons from the mitochondrial matrix. The chain is Cytochrome c oxidase subunit 2 from Rattus norvegicus (Rat).